Reading from the N-terminus, the 188-residue chain is Elongation factor P (188 aa).

Belongs to the elongation factor P family.

It localises to the cytoplasm. The protein operates within protein biosynthesis; polypeptide chain elongation. In terms of biological role, involved in peptide bond synthesis. Stimulates efficient translation and peptide-bond synthesis on native or reconstituted 70S ribosomes in vitro. Probably functions indirectly by altering the affinity of the ribosome for aminoacyl-tRNA, thus increasing their reactivity as acceptors for peptidyl transferase. In Ralstonia nicotianae (strain ATCC BAA-1114 / GMI1000) (Ralstonia solanacearum), this protein is Elongation factor P.